The sequence spans 91 residues: Lipolysis-activating peptide 1-alpha chain (91 aa).

A signal peptide spans 1-22 (MMKLVLFGIIVILFSLIGSIHG). Residues 24 to 87 (SGNYPLNPYG…VWNAVKKHCK (64 aa)) enclose the LCN-type CS-alpha/beta domain. Intrachain disulfides connect C38–C61, C47–C66, and C51–C68.

Belongs to the long (3 C-C) scorpion toxin superfamily. In terms of assembly, monomer (edited version) and heterodimer (non-edited version) of this alpha chain and a beta chain (AC P84809). Expressed by the venom gland.

It is found in the secreted. Its function is as follows. The heterodimer non-edited LVP1 induces lipolysis in rat adipocytes. Induction of lipolysis by LVP1 appears to be mediated through the beta-2 adrenergic receptor pathway (ADRB2). Intracerebroventricular injection is not toxic to mice. The edited BmKBTx-like, similar to beta-toxins, may modulate voltage-gated sodium channels (Nav) and may block voltage-gated potassium channels (Kv). This chain is Lipolysis-activating peptide 1-alpha chain, found in Buthus occitanus tunetanus (Common European scorpion).